We begin with the raw amino-acid sequence, 214 residues long: Guanylate kinase (214 aa).

Residues 6–192 (GTLYIISAPS…ALEDLKAIFR (187 aa)) enclose the Guanylate kinase-like domain. An ATP-binding site is contributed by 13-20 (APSGAGKT).

The protein belongs to the guanylate kinase family.

It is found in the cytoplasm. The catalysed reaction is GMP + ATP = GDP + ADP. Its function is as follows. Essential for recycling GMP and indirectly, cGMP. This is Guanylate kinase from Pseudomonas syringae pv. syringae (strain B728a).